We begin with the raw amino-acid sequence, 464 residues long: GDNF family receptor alpha-2 (464 aa).

A signal peptide spans Met1–Ala21. 14 disulfide bridges follow: Cys40–Cys93, Cys47–Cys53, Cys63–Cys78, Cys95–Cys105, Cys161–Cys222, Cys168–Cys174, Cys185–Cys200, Cys195–Cys241, Cys224–Cys229, Cys251–Cys323, Cys258–Cys264, Cys275–Cys293, Cys285–Cys347, and Cys325–Cys335. An N-linked (GlcNAc...) asparagine glycan is attached at Asn52. N-linked (GlcNAc...) asparagine glycosylation occurs at Asn357. Residues Met363 to Thr392 are disordered. The segment covering Thr381 to Thr392 has biased composition (low complexity). N-linked (GlcNAc...) asparagine glycosylation is present at Asn413. Ser443 carries the GPI-anchor amidated serine lipid modification. A propeptide spans Cys444–Gln464 (removed in mature form).

This sequence belongs to the GDNFR family. In terms of assembly, interacts with NRTN ligand and RET: forms a 2:2:2 ternary complex composed of NRTN ligand, GFRA2 and RET receptor. Also forms a 4:4:4 tetrameric complex composed of 4 copies of NRTN ligand, GFRA2 and RET receptor, which prevents endocytosis of RET. Interacts with SORL1. Neurons of the superior cervical and dorsal root ganglia, and adult brain and testis. Low level in the substantia nigra, spleen and adrenal gland. Isoform 1, isoform 2 and isoform 3 are all expressed in brain, liver, ileum, spleen, heart and kidney. In brain, isoform 1 is most abundant, isoform 2 slightly less and isoform 3 is lowest. No significant levels of isoform 1, isoform 2 or isoform 3 expression in testis.

It is found in the cell membrane. Functionally, receptor for neurturin (NRTN), a growth factor that supports the survival of sympathetic neurons. NRTN-binding leads to autophosphorylation and activation of the RET receptor. Also able to mediate GDNF signaling through the RET tyrosine kinase receptor. In terms of biological role, participates in NRTN-induced 'Ser-727' phosphorylation of STAT3. This Mus musculus (Mouse) protein is GDNF family receptor alpha-2.